Consider the following 475-residue polypeptide: Glutamate--tRNA ligase 2 (475 aa).

A 'HIGH' region motif is present at residues 9–19 (PSPTGFLHIGS). The short motif at 238–242 (KLSKR) is the 'KMSKS' region element. Lys241 provides a ligand contact to ATP.

This sequence belongs to the class-I aminoacyl-tRNA synthetase family. Glutamate--tRNA ligase type 1 subfamily. Monomer.

It localises to the cytoplasm. It catalyses the reaction tRNA(Glu) + L-glutamate + ATP = L-glutamyl-tRNA(Glu) + AMP + diphosphate. Functionally, catalyzes the attachment of glutamate to tRNA(Glu) in a two-step reaction: glutamate is first activated by ATP to form Glu-AMP and then transferred to the acceptor end of tRNA(Glu). This chain is Glutamate--tRNA ligase 2, found in Bartonella quintana (strain Toulouse) (Rochalimaea quintana).